Reading from the N-terminus, the 151-residue chain is 6,7-dimethyl-8-ribityllumazine synthase (151 aa).

5-amino-6-(D-ribitylamino)uracil-binding positions include Phe-18, 49–51 (ALE), and 74–76 (CVI). 79 to 80 (ET) contacts (2S)-2-hydroxy-3-oxobutyl phosphate. The active-site Proton donor is His-82. 5-amino-6-(D-ribitylamino)uracil is bound at residue Asn-107. Arg-121 serves as a coordination point for (2S)-2-hydroxy-3-oxobutyl phosphate.

This sequence belongs to the DMRL synthase family.

It catalyses the reaction (2S)-2-hydroxy-3-oxobutyl phosphate + 5-amino-6-(D-ribitylamino)uracil = 6,7-dimethyl-8-(1-D-ribityl)lumazine + phosphate + 2 H2O + H(+). The protein operates within cofactor biosynthesis; riboflavin biosynthesis; riboflavin from 2-hydroxy-3-oxobutyl phosphate and 5-amino-6-(D-ribitylamino)uracil: step 1/2. Catalyzes the formation of 6,7-dimethyl-8-ribityllumazine by condensation of 5-amino-6-(D-ribitylamino)uracil with 3,4-dihydroxy-2-butanone 4-phosphate. This is the penultimate step in the biosynthesis of riboflavin. The protein is 6,7-dimethyl-8-ribityllumazine synthase of Bartonella tribocorum (strain CIP 105476 / IBS 506).